We begin with the raw amino-acid sequence, 258 residues long: Regulatory protein RecX (258 aa).

It belongs to the RecX family.

The protein localises to the cytoplasm. Modulates RecA activity. This Streptococcus pyogenes serotype M3 (strain ATCC BAA-595 / MGAS315) protein is Regulatory protein RecX.